A 622-amino-acid polypeptide reads, in one-letter code: Modification methylase LlaI (622 aa).

Belongs to the N(4)/N(6)-methyltransferase family.

It carries out the reaction a 2'-deoxyadenosine in DNA + S-adenosyl-L-methionine = an N(6)-methyl-2'-deoxyadenosine in DNA + S-adenosyl-L-homocysteine + H(+). In terms of biological role, an alpha subtype methylase that modifies unknown specific adenine residues, and protects the DNA from cleavage by the LlaI endonuclease. This chain is Modification methylase LlaI, found in Lactococcus lactis subsp. lactis (Streptococcus lactis).